Here is a 324-residue protein sequence, read N- to C-terminus: Lipoyl synthase (324 aa).

The [4Fe-4S] cluster site is built by Cys-65, Cys-70, Cys-76, Cys-91, Cys-95, Cys-98, and Ser-302. A Radical SAM core domain is found at 77–291 (WEDREATFLI…AQYAEGLGFA (215 aa)).

The protein belongs to the radical SAM superfamily. Lipoyl synthase family. Requires [4Fe-4S] cluster as cofactor.

The protein localises to the cytoplasm. It carries out the reaction [[Fe-S] cluster scaffold protein carrying a second [4Fe-4S](2+) cluster] + N(6)-octanoyl-L-lysyl-[protein] + 2 oxidized [2Fe-2S]-[ferredoxin] + 2 S-adenosyl-L-methionine + 4 H(+) = [[Fe-S] cluster scaffold protein] + N(6)-[(R)-dihydrolipoyl]-L-lysyl-[protein] + 4 Fe(3+) + 2 hydrogen sulfide + 2 5'-deoxyadenosine + 2 L-methionine + 2 reduced [2Fe-2S]-[ferredoxin]. It functions in the pathway protein modification; protein lipoylation via endogenous pathway; protein N(6)-(lipoyl)lysine from octanoyl-[acyl-carrier-protein]: step 2/2. Functionally, catalyzes the radical-mediated insertion of two sulfur atoms into the C-6 and C-8 positions of the octanoyl moiety bound to the lipoyl domains of lipoate-dependent enzymes, thereby converting the octanoylated domains into lipoylated derivatives. This chain is Lipoyl synthase, found in Mycobacterium ulcerans (strain Agy99).